The chain runs to 702 residues: Zinc finger CCCH domain-containing protein 62 (702 aa).

Residues 1-77 (MAAPAADDDD…SYDDPTFDPA (77 aa)) form a disordered region. Positions 18 to 54 (EEDDGEEEEGSEEEVESDDEEEEEGEGYDWSEEDDPE) are enriched in acidic residues. Positions 132 to 166 (LEKLKVYECKAYLRMHKLRLSGNKEVLLTRIRGQI) constitute an SAP domain. Disordered regions lie at residues 288 to 349 (EKHA…NTVQ), 405 to 532 (SRTS…QQQP), 546 to 602 (GGTS…RETH), and 634 to 673 (QMSQ…NPQR). Positions 298-325 (KTREVRIKDKENERMRRLNRNKENKSKG) are enriched in basic and acidic residues. 2 stretches are compositionally biased toward polar residues: residues 326–349 (QDNM…NTVQ) and 405–419 (SRTS…QAPS). Residues 430–448 (QQQQQQQPPKSIKPAPIQQ) show a composition bias toward low complexity. Composition is skewed to polar residues over residues 472-502 (SQEQ…QHGG), 522-532 (QQAVSYTQQQP), 546-565 (GGTS…NWGS), and 575-591 (PFTQ…NGSG). The C3H1-type zinc finger occupies 674–702 (FRPWKPCFIYQQQGWCPYGENCKFMHDLR).

This Oryza sativa subsp. japonica (Rice) protein is Zinc finger CCCH domain-containing protein 62.